A 232-amino-acid chain; its full sequence is Ribonuclease 3 (232 aa).

The 130-residue stretch at 5–134 (NDAISKIIDY…LIGAIYIDGG (130 aa)) folds into the RNase III domain. Residue Glu-47 participates in Mg(2+) binding. Asp-51 is an active-site residue. Residues Asn-120 and Glu-123 each coordinate Mg(2+). Residue Glu-123 is part of the active site. A DRBM domain is found at 159–228 (DPKTSLQEWT…AELMLEKIGK (70 aa)).

The protein belongs to the ribonuclease III family. Homodimer. Mg(2+) serves as cofactor.

It localises to the cytoplasm. The enzyme catalyses Endonucleolytic cleavage to 5'-phosphomonoester.. Functionally, digests double-stranded RNA. Involved in the processing of primary rRNA transcript to yield the immediate precursors to the large and small rRNAs (23S and 16S). Processes some mRNAs, and tRNAs when they are encoded in the rRNA operon. Processes pre-crRNA and tracrRNA of type II CRISPR loci if present in the organism. The sequence is that of Ribonuclease 3 from Wolbachia pipientis wMel.